Consider the following 116-residue polypeptide: Cysteine proteinase inhibitor 1 (116 aa).

A signal peptide spans 1–22 (MVPKPLSLLLLLLLALSAAVVG). The region spanning 30–89 (GGWRPIENLNSAEVQDVAQFAVSEHNKQANDELQYQSVVRGYTQVVAGTNYRLVIAAKDG) is the Cystatin domain. A Secondary area of contact motif is present at residues 73 to 77 (QVVAG). N-linked (GlcNAc...) asparagine glycosylation is present at asparagine 109.

This sequence belongs to the cystatin family. Phytocystatin subfamily.

It localises to the secreted. Its function is as follows. Specific inhibitor of papain family cysteine proteinases. The sequence is that of Cysteine proteinase inhibitor 1 from Actinidia chinensis var. chinensis (Chinese soft-hair kiwi).